The following is a 130-amino-acid chain: Small ribosomal subunit protein uS11 (130 aa).

It belongs to the universal ribosomal protein uS11 family. Part of the 30S ribosomal subunit. Interacts with proteins S7 and S18. Binds to IF-3.

Located on the platform of the 30S subunit, it bridges several disparate RNA helices of the 16S rRNA. Forms part of the Shine-Dalgarno cleft in the 70S ribosome. The protein is Small ribosomal subunit protein uS11 of Prochlorococcus marinus (strain AS9601).